The chain runs to 890 residues: Phosphatidate phosphatase LPIN1 (890 aa).

An N-LIP region spans residues 1–108 (MNYVGQLAGQ…IPMHLATSPI (108 aa)). Phosphoserine is present on residues Ser106 and Ser150. 4 disordered regions span residues 125-183 (VDRM…DMFP), 228-300 (SYPN…SSRK), 365-392 (KPPS…SRHL), and 421-456 (SGLA…STSD). The span at 152-161 (VKKRRKRRRK) shows a compositional bias: basic residues. The short motif at 153 to 158 (KKRRKR) is the Nuclear localization signal element. 2 stretches are compositionally biased toward basic and acidic residues: residues 162–172 (SQLDSLKRDDN) and 252–265 (SDSE…ERTG). 3 positions are modified to phosphoserine: Ser252, Ser254, and Ser260. Thr264 carries the post-translational modification Phosphothreonine. At Ser294 the chain carries Phosphoserine. N6-acetyllysine is present on Lys425. A compositionally biased stretch (polar residues) spans 431–440 (GARSANQSPQ). Phosphoserine occurs at positions 434, 438, and 449. The span at 441–456 (SVGSSGVDSGVESTSD) shows a compositional bias: low complexity. A Glycyl lysine isopeptide (Lys-Gly) (interchain with G-Cter in SUMO) cross-link involves residue Lys565. The tract at residues 566–616 (EESKPEQCLAGKAHSTGEQPPQLSLATRVKHESSSSDEERAAAKPSNAGHL) is disordered. Polar residues predominate over residues 581 to 590 (TGEQPPQLSL). Over residues 594-607 (VKHESSSSDEERAA) the composition is skewed to basic and acidic residues. Lys595 carries the N6-acetyllysine modification. Residue Lys595 forms a Glycyl lysine isopeptide (Lys-Gly) (interchain with G-Cter in SUMO) linkage. Phosphoserine occurs at positions 600 and 601. The tract at residues 624 to 830 (YKKTLRLTSE…VNPKGELVQE (207 aa)) is C-LIP. The DXDXT motif signature appears at 678–682 (DIDGT). The short motif at 689-693 (LGHIL) is the LXXIL motif element. A phosphoserine mark is found at Ser887 and Ser889.

The protein belongs to the lipin family. In terms of assembly, interacts (via LXXIL motif) with PPARA. Interacts with PPARGC1A. Interaction with PPARA and PPARGC1A leads to the formation of a complex that modulates gene transcription. Interacts with MEF2C. Mg(2+) is required as a cofactor. The cofactor is Mn(2+). Post-translationally, phosphorylated at multiple sites by mTOR in response to insulin, leading to its inactivation. Phosphorylation does not affect the catalytic activity but regulates the localization. Phosphorylation is decreased by epinephrine. Dephosphorylated by the CTDNEP1-CNEP1R1 complex. Dephosphorylation following mTOR inhibition promotes its activity. Acetylation at Lys-425 and Lys-595 by KAT5 in response to fatty acids promotes translocation to the endoplasmic reticulum and synthesis of diacylglycerol. In terms of processing, sumoylated. In terms of tissue distribution, specifically expressed in skeletal muscle. Also abundant in adipose tissue. Lower levels in some portions of the digestive tract.

The protein resides in the cytoplasm. It is found in the cytosol. Its subcellular location is the endoplasmic reticulum membrane. It localises to the nucleus membrane. The enzyme catalyses a 1,2-diacyl-sn-glycero-3-phosphate + H2O = a 1,2-diacyl-sn-glycerol + phosphate. It carries out the reaction 1-octadecanoyl-2-(4Z,7Z,10Z,13Z,16Z,19Z-docosahexaenoyl)-sn-glycero-3-phosphate + H2O = 1-octadecanoyl-2-(4Z,7Z,10Z,13Z,16Z,19Z-docosahexaenoyl)-sn-glycerol + phosphate. It catalyses the reaction 1-octadecanoyl-2-(5Z,8Z,11Z,14Z-eicosatetraenoyl)-sn-glycero-3-phosphate + H2O = 1-octadecanoyl-2-(5Z,8Z,11Z,14Z-eicosatetraenoyl)-sn-glycerol + phosphate. The catalysed reaction is 1-octadecanoyl-2-(9Z,12Z-octadecadienoyl)-sn-glycero-3-phosphate + H2O = 1-octadecanoyl-2-(9Z,12Z)-octadecadienoyl-sn-glycerol + phosphate. The enzyme catalyses 1-octadecanoyl-2-(9Z-octadecenoyl)-sn-glycero-3-phosphate + H2O = 1-octadecanoyl-2-(9Z-octadecenoyl)-sn-glycerol + phosphate. It carries out the reaction 1-hexadecanoyl-2-(4Z,7Z,10Z,13Z,16Z,19Z-docosahexaenoyl)-sn-glycero-3-phosphate + H2O = 1-hexadecanoyl-2-(4Z,7Z,10Z,13Z,16Z,19Z-docosahexaenoyl)-sn-glycerol + phosphate. It catalyses the reaction 1,2-dioctadecanoyl-sn-glycero-3-phosphate + H2O = 1,2-dioctadecanoyl-sn-glycerol + phosphate. The catalysed reaction is 1-hexadecanoyl-2-(5Z,8Z,11Z,14Z-eicosatetraenoyl)-sn-glycero-3-phosphate + H2O = 1-hexadecanoyl-2-(5Z,8Z,11Z,14Z-eicosatetraenoyl)-sn-glycerol + phosphate. The enzyme catalyses 1-hexadecanoyl-2-(9Z,12Z-octadecadienoyl)-sn-glycero-3-phosphate + H2O = 1-hexadecanoyl-2-(9Z,12Z-octadecadienoyl)-sn-glycerol + phosphate. It carries out the reaction 1-hexadecanoyl-2-(9Z-octadecenoyl)-sn-glycero-3-phosphate + H2O = 1-hexadecanoyl-2-(9Z-octadecenoyl)-sn-glycerol + phosphate. It catalyses the reaction 1,2-di-(4Z,7Z,10Z,13Z,16Z,19Z-docosahexaenoyl)-sn-glycero-3-phosphate + H2O = 1,2-di-(4Z,7Z,10Z,13Z,16Z,19Z-docosahexaenoyl)-sn-glycerol + phosphate. The catalysed reaction is 1,2-di-(5Z,8Z,11Z,14Z)-eicosatetraenoyl-sn-glycero-3-phosphate + H2O = 1,2-di-(5Z,8Z,11Z,14Z)-eicosatetraenoyl-sn-glycerol + phosphate. The enzyme catalyses 1,2-di-(9Z,12Z-octadecadienoyl)-sn-glycero-3-phosphate + H2O = 1,2-di-(9Z,12Z-octadecadienoyl)-sn-glycerol + phosphate. It carries out the reaction 1,2-di-(9Z-octadecenoyl)-sn-glycero-3-phosphate + H2O = 1,2-di-(9Z-octadecenoyl)-sn-glycerol + phosphate. It catalyses the reaction 1,2-dihexadecanoyl-sn-glycero-3-phosphate + H2O = 1,2-dihexadecanoyl-sn-glycerol + phosphate. Its activity is regulated as follows. Potently inhibited by sphingolipids, in particular, the sphingoid bases sphinganine and sphingosine and ceramide-1-phosphate. Inhibited by concentrations of Mg(2+) and Mn(2+) above their optimums and by Ca(2+), Zn(2+), N-ethylmaleimide and propranolol. Sertraline and propanolol inhibit activity in dose-dependent manners with IC(50) values of 103 uM and 226 uM, respectively. With respect to regulation, sertraline and propanolol inhibit activity in dose-dependent manners with IC(50) values of 108 uM and 271 uM, respectively. Its activity is regulated as follows. Sertraline and propanolol inhibit activity in dose-dependent manners with IC(50) values of 143 uM and 227 uM, respectively. Functionally, acts as a magnesium-dependent phosphatidate phosphatase enzyme which catalyzes the conversion of phosphatidic acid to diacylglycerol during triglyceride, phosphatidylcholine and phosphatidylethanolamine biosynthesis and therefore controls the metabolism of fatty acids at different levels. Is involved in adipocyte differentiation. Recruited at the mitochondrion outer membrane and is involved in mitochondrial fission by converting phosphatidic acid to diacylglycerol. Acts also as nuclear transcriptional coactivator for PPARGC1A/PPARA regulatory pathway to modulate lipid metabolism gene expression. The chain is Phosphatidate phosphatase LPIN1 from Homo sapiens (Human).